The chain runs to 312 residues: Aldehyde reductase YPR1 (312 aa).

The active-site Proton donor is the Tyr-56. His-112 is a substrate binding site. 220-274 (SPFGSANAPLLKEQAIIDMAKKHGVEPAQLIISWSIQRGYVVLAKSVNPERIVSN) lines the NADP(+) pocket.

Belongs to the aldo/keto reductase family.

The protein localises to the cytoplasm. The enzyme catalyses a primary alcohol + NADP(+) = an aldehyde + NADPH + H(+). It catalyses the reaction 2-methylbutan-1-ol + NADP(+) = 2-methylbutanal + NADPH + H(+). The catalysed reaction is hexan-1-ol + NADP(+) = hexanal + NADPH + H(+). Its function is as follows. Aldehyde reductase with broad substrate specificity, catalyzing the NADPH-dependent reduction of aldehydes into the corresponding alcohols. In vitro, displays high specific activity towards 2-methylbutanal (2-methylbutyraldehyde), as well as other aldehydes such as hexanal (a toxic lipid peroxidation product and phytoalexin), but exhibits extremely low activity as a glycerol dehydrogenase. Seems to contribute to 2-methylbutanal reduction in vivo, and may therefore play a role in isoleucine catabolism and fusel alcohol formation. In Saccharomyces cerevisiae (strain ATCC 204508 / S288c) (Baker's yeast), this protein is Aldehyde reductase YPR1 (YPR1).